We begin with the raw amino-acid sequence, 51 residues long: Large ribosomal subunit protein eL39z/eL39x (51 aa).

The interval 1–21 (MPSHKSFMIKKKLGKKMRQNR) is disordered. Residues 7-19 (FMIKKKLGKKMRQ) show a composition bias toward basic residues.

It belongs to the eukaryotic ribosomal protein eL39 family.

The chain is Large ribosomal subunit protein eL39z/eL39x (RPL39A) from Arabidopsis thaliana (Mouse-ear cress).